The primary structure comprises 566 residues: Transcription factor atf1 (566 aa).

A compositionally biased stretch (polar residues) spans 1-42; sequence MSPSPVNTSTEPASVAAVSNGNATASSTQVPENNQSDSFAPP. Disordered stretches follow at residues 1–83, 96–117, 315–345, and 357–479; these read MSPS…FVGS, SFGS…PSLS, QQQT…PQAS, and SQQF…KSFL. The span at 43 to 53 shows a compositional bias: low complexity; the sequence is SNNSQQNQQSS. 2 stretches are compositionally biased toward polar residues: residues 65–76 and 97–106; these read ANANPADQSDGV and FGSTASVGQG. Residues 107 to 117 are compositionally biased toward low complexity; that stretch reads NPSLNRNPSLS. Polar residues-rich tracts occupy residues 379–412 and 421–460; these read TLRQ…TANS and TDYS…YSKG. Residues 466–479 are compositionally biased toward basic and acidic residues; it reads SKNETDEEKRKSFL. The 64-residue stretch at 472-535 folds into the bZIP domain; sequence EEKRKSFLER…VSLKTLLIAH (64 aa). Residues 474 to 503 are basic motif; sequence KRKSFLERNRQAALKCRQRKKQWLSNLQAK. A leucine-zipper region spans residues 514 to 528; sequence LSAQVSALREEIVSL.

Belongs to the bZIP family. In terms of assembly, heterodimer of pcr1/mts2 and atf1/mts1. In terms of processing, phosphorylated by sty1/spc1.

It is found in the nucleus. Functionally, transcription factor required for sexual development and entry into stationary phase. Binds and activates CRE sites (cAMP-response elements, also known as M26 meiotic recombination hotspots). In Schizosaccharomyces pombe (strain 972 / ATCC 24843) (Fission yeast), this protein is Transcription factor atf1 (atf1).